A 597-amino-acid polypeptide reads, in one-letter code: Putative lipase ATG15 (597 aa).

Residues 1–15 (MTLEKNRHANKGTSW) are Cytoplasmic-facing. A helical; Signal-anchor for type II membrane protein membrane pass occupies residues 16-36 (TWMIYKFVVGVITVAILVLFI). Residues 37–597 (TQKSVSQAQD…DDDEDTFERK (561 aa)) lie on the Lumenal side of the membrane. N-linked (GlcNAc...) asparagine glycosylation is found at Asn195, Asn262, and Asn346. Residue Ser364 is the Charge relay system of the active site. Asn481 is a glycosylation site (N-linked (GlcNAc...) asparagine). The tract at residues 507–570 (EKDEPKLPNP…PTDQDPPKKC (64 aa)) is disordered. Residues 519–554 (SSSKSTLSTKTTSLKSSSTYSGSTSSSTVTKTTQTS) are compositionally biased toward low complexity.

Belongs to the AB hydrolase superfamily. Lipase family. Binds to both phosphatidylinositol (PI) and phosphatidylinositol 3,5-bisphosphate (PIP2).

It is found in the endosome. The protein resides in the multivesicular body membrane. It localises to the prevacuolar compartment membrane. The catalysed reaction is a triacylglycerol + H2O = a diacylglycerol + a fatty acid + H(+). Functionally, lipase which is essential for lysis of subvacuolar cytoplasm to vacuole targeted bodies and intravacuolar autophagic bodies. Involved in the lysis of intravacuolar multivesicular body (MVB) vesicles. The intravacuolar membrane disintegration by ATG15 is critical to life span extension. This is Putative lipase ATG15 (ATG15) from Candida albicans (strain SC5314 / ATCC MYA-2876) (Yeast).